Consider the following 49-residue polypeptide: uncharacterized protein (49 aa).

The helical transmembrane segment at 6 to 28 (IYPLTVFYFFAIEMSVFCYYNWF) threads the bilayer.

The protein localises to the membrane. This is an uncharacterized protein from Saccharomyces cerevisiae (strain ATCC 204508 / S288c) (Baker's yeast).